A 337-amino-acid chain; its full sequence is Lipoate-protein ligase A (337 aa).

The BPL/LPL catalytic domain occupies 29 to 216 (DQNQTILFLW…AFFNYYQTTV (188 aa)). ATP contacts are provided by residues Arg71, 76–79 (GAVF), and Lys134. Lys134 is a (R)-lipoate binding site.

Belongs to the LplA family. Monomer.

Its subcellular location is the cytoplasm. The catalysed reaction is L-lysyl-[lipoyl-carrier protein] + (R)-lipoate + ATP = N(6)-[(R)-lipoyl]-L-lysyl-[lipoyl-carrier protein] + AMP + diphosphate + H(+). It participates in protein modification; protein lipoylation via exogenous pathway; protein N(6)-(lipoyl)lysine from lipoate: step 1/2. Its pathway is protein modification; protein lipoylation via exogenous pathway; protein N(6)-(lipoyl)lysine from lipoate: step 2/2. Functionally, catalyzes both the ATP-dependent activation of exogenously supplied lipoate to lipoyl-AMP and the transfer of the activated lipoyl onto the lipoyl domains of lipoate-dependent enzymes. This chain is Lipoate-protein ligase A, found in Blochmanniella floridana.